We begin with the raw amino-acid sequence, 138 residues long: Ribosome-binding factor A (138 aa).

Residues 1-20 (MSSRPPSSSGPAGIPKGAPS) show a composition bias toward low complexity. Positions 1 to 21 (MSSRPPSSSGPAGIPKGAPSQ) are disordered.

This sequence belongs to the RbfA family. As to quaternary structure, monomer. Binds 30S ribosomal subunits, but not 50S ribosomal subunits or 70S ribosomes.

It localises to the cytoplasm. Functionally, one of several proteins that assist in the late maturation steps of the functional core of the 30S ribosomal subunit. Associates with free 30S ribosomal subunits (but not with 30S subunits that are part of 70S ribosomes or polysomes). Required for efficient processing of 16S rRNA. May interact with the 5'-terminal helix region of 16S rRNA. The protein is Ribosome-binding factor A of Granulibacter bethesdensis (strain ATCC BAA-1260 / CGDNIH1).